The following is a 210-amino-acid chain: Glycerol-3-phosphate acyltransferase (210 aa).

6 consecutive transmembrane segments (helical) span residues 8–28 (LILL…LLLT), 56–76 (GLAA…VLIA), 87–107 (TMAV…WLGF), 119–139 (TIWV…LLVA), 144–164 (ISSA…VLLS), and 165–185 (GRPL…LIWA).

It belongs to the PlsY family. In terms of assembly, probably interacts with PlsX.

The protein resides in the cell inner membrane. It carries out the reaction an acyl phosphate + sn-glycerol 3-phosphate = a 1-acyl-sn-glycero-3-phosphate + phosphate. The protein operates within lipid metabolism; phospholipid metabolism. Catalyzes the transfer of an acyl group from acyl-phosphate (acyl-PO(4)) to glycerol-3-phosphate (G3P) to form lysophosphatidic acid (LPA). This enzyme utilizes acyl-phosphate as fatty acyl donor, but not acyl-CoA or acyl-ACP. The chain is Glycerol-3-phosphate acyltransferase from Gluconobacter oxydans (strain 621H) (Gluconobacter suboxydans).